The sequence spans 906 residues: Protein translocase subunit SecA (906 aa).

ATP is bound by residues Q86, 104 to 108 (GEGKT), and D511. Composition is skewed to basic and acidic residues over residues 853–865 (HESV…RHDE) and 877–888 (VRREGPKVKRND). The disordered stretch occupies residues 853–906 (HESVIDNNQRHDEDEQEETPKVQQVRREGPKVKRNDPCPCGSGKKYKQCHGKVE). Residues C890, C892, C901, and H902 each coordinate Zn(2+). The span at 896-906 (KKYKQCHGKVE) shows a compositional bias: basic residues.

This sequence belongs to the SecA family. Monomer and homodimer. Part of the essential Sec protein translocation apparatus which comprises SecA, SecYEG and auxiliary proteins SecDF-YajC and YidC. It depends on Zn(2+) as a cofactor.

The protein localises to the cell inner membrane. It is found in the cytoplasm. It catalyses the reaction ATP + H2O + cellular proteinSide 1 = ADP + phosphate + cellular proteinSide 2.. Functionally, part of the Sec protein translocase complex. Interacts with the SecYEG preprotein conducting channel. Has a central role in coupling the hydrolysis of ATP to the transfer of proteins into and across the cell membrane, serving both as a receptor for the preprotein-SecB complex and as an ATP-driven molecular motor driving the stepwise translocation of polypeptide chains across the membrane. The protein is Protein translocase subunit SecA of Francisella tularensis subsp. novicida (strain U112).